Consider the following 209-residue polypeptide: GTP-binding nuclear protein Ran1A (209 aa).

One can recognise a Small GTPase Ran-type domain in the interval 1–162 (NFKLVIVGDG…LYLARKLAGD (162 aa)). GTP is bound at residue 9–16 (DGGTGKTT). Positions 28–36 (KKYEPTIGV) are switch-I. GTP contacts are provided by residues glycine 59, 113-116 (NKVD), and 141-143 (SAK). Residues 59–75 (GQEKFGGLRDGYYIHGQ) form a switch-II region. The segment covering 187–196 (QHEAELAQAA) has biased composition (low complexity). Residues 187 to 209 (QHEAELAQAASQPLPDDDDDAFD) are disordered.

The protein belongs to the small GTPase superfamily. Ran family. In terms of assembly, found in a nuclear export complex with RanGTP, exportin and pre-miRNA.

The protein resides in the nucleus. GTP-binding protein involved in nucleocytoplasmic transport. Required for the import of protein into the nucleus and also for RNA export. Involved in chromatin condensation and control of cell cycle. The chain is GTP-binding nuclear protein Ran1A (RAN1A) from Lotus japonicus (Lotus corniculatus var. japonicus).